A 203-amino-acid chain; its full sequence is Nucleoside triphosphate pyrophosphatase (203 aa).

Residue aspartate 80 is the Proton acceptor of the active site.

It belongs to the Maf family. It depends on a divalent metal cation as a cofactor.

The protein resides in the cytoplasm. It carries out the reaction a ribonucleoside 5'-triphosphate + H2O = a ribonucleoside 5'-phosphate + diphosphate + H(+). The catalysed reaction is a 2'-deoxyribonucleoside 5'-triphosphate + H2O = a 2'-deoxyribonucleoside 5'-phosphate + diphosphate + H(+). Its function is as follows. Nucleoside triphosphate pyrophosphatase. May have a dual role in cell division arrest and in preventing the incorporation of modified nucleotides into cellular nucleic acids. This is Nucleoside triphosphate pyrophosphatase from Gluconobacter oxydans (strain 621H) (Gluconobacter suboxydans).